We begin with the raw amino-acid sequence, 241 residues long: Thymidylate kinase (241 aa).

Residue 17 to 24 (GGEGAGKT) participates in ATP binding.

Belongs to the thymidylate kinase family.

It carries out the reaction dTMP + ATP = dTDP + ADP. Phosphorylation of dTMP to form dTDP in both de novo and salvage pathways of dTTP synthesis. In Thermosynechococcus vestitus (strain NIES-2133 / IAM M-273 / BP-1), this protein is Thymidylate kinase.